We begin with the raw amino-acid sequence, 378 residues long: Erythronate-4-phosphate dehydrogenase (378 aa).

Residues Ser45 and Thr66 each coordinate substrate. Residues Asp146 and Thr175 each coordinate NAD(+). The active site involves Arg208. NAD(+) is bound at residue Asp232. Glu237 is an active-site residue. His254 acts as the Proton donor in catalysis. Residue Gly257 participates in NAD(+) binding. Tyr258 lines the substrate pocket.

The protein belongs to the D-isomer specific 2-hydroxyacid dehydrogenase family. PdxB subfamily. In terms of assembly, homodimer.

It is found in the cytoplasm. The catalysed reaction is 4-phospho-D-erythronate + NAD(+) = (R)-3-hydroxy-2-oxo-4-phosphooxybutanoate + NADH + H(+). Its pathway is cofactor biosynthesis; pyridoxine 5'-phosphate biosynthesis; pyridoxine 5'-phosphate from D-erythrose 4-phosphate: step 2/5. Its function is as follows. Catalyzes the oxidation of erythronate-4-phosphate to 3-hydroxy-2-oxo-4-phosphonooxybutanoate. This chain is Erythronate-4-phosphate dehydrogenase, found in Escherichia coli O8 (strain IAI1).